Here is a 198-residue protein sequence, read N- to C-terminus: Recombination protein RecR (198 aa).

The C4-type zinc finger occupies 58–73 (CSVCGNFTDTDPCAIC). Residues 81–175 (DIICVVEQPK…KVTRIAAGIP (95 aa)) enclose the Toprim domain.

It belongs to the RecR family.

In terms of biological role, may play a role in DNA repair. It seems to be involved in an RecBC-independent recombinational process of DNA repair. It may act with RecF and RecO. The chain is Recombination protein RecR from Clostridium perfringens (strain ATCC 13124 / DSM 756 / JCM 1290 / NCIMB 6125 / NCTC 8237 / Type A).